The following is a 165-amino-acid chain: MDAPRRDMELLSNSLAAYAHIRANPESFGLYFVLGVCFGLLLTLCLLVISISWAPRPRPRGPAQRRDPRSSTLEPEDDDEDEEDTVTRLGPDDTLPGPELSAEPDGPLNVNVFTSAEELERAQRLEERERILREIWRTGQPDLLGTGTLGPSPTATGTLGRMHYY.

A helical membrane pass occupies residues 29–49; it reads GLYFVLGVCFGLLLTLCLLVI. Disordered stretches follow at residues 57–109 and 143–165; these read PRPR…GPLN and LLGT…MHYY. Residues 74–84 are compositionally biased toward acidic residues; that stretch reads EPEDDDEDEED. Phosphothreonine occurs at positions 85, 148, and 158.

This sequence belongs to the EVA1 family.

The protein localises to the membrane. This chain is Protein eva-1 homolog B (EVA1B), found in Homo sapiens (Human).